The chain runs to 96 residues: UPF0235 protein VV2877 (96 aa).

The protein belongs to the UPF0235 family.

The polypeptide is UPF0235 protein VV2877 (Vibrio vulnificus (strain YJ016)).